A 594-amino-acid chain; its full sequence is Transcription factor BYE1 (594 aa).

Polar residues predominate over residues 1-13 (MSVRTSSRSNKGQ). The tract at residues 1–65 (MSVRTSSRSN…DTENVRTDEV (65 aa)) is disordered. Basic and acidic residues predominate over residues 36-63 (KVDSATEKNKKSDSSQEPRKDTENVRTD). A PHD-type zinc finger spans residues 72–134 (YVRCLCGANN…KYYCELCDPS (63 aa)). The disordered stretch occupies residues 142–231 (SKEAEVSEDE…EMPTRKDFES (90 aa)). A compositionally biased stretch (basic and acidic residues) spans 155–164 (DDVYKPVNDH). Residues 165–175 (DDNDADVFLDE) are compositionally biased toward acidic residues. Ser177 bears the Phosphoserine mark. The span at 191 to 208 (IHIKSKQVKKSNGSKKRN) shows a compositional bias: basic residues. Basic and acidic residues predominate over residues 209–231 (KSIDAAKSDTAENEMPTRKDFES). The region spanning 254–365 (VPETIEAKLY…DKVILENFIV (112 aa)) is the TFIIS central domain.

This sequence belongs to the BYE1 family. In terms of assembly, interacts with the RNA polymerase RPB1 subunit and specifically with the trimethylated H3 histone H3K4me3.

The protein localises to the nucleus. Negative regulator of transcription elongation. In Saccharomyces cerevisiae (strain YJM789) (Baker's yeast), this protein is Transcription factor BYE1 (BYE1).